We begin with the raw amino-acid sequence, 306 residues long: Meiotically up-regulated gene 73 protein (306 aa).

7 consecutive transmembrane segments (helical) span residues 28–48 (YWAVFAVFLLCAIVFPLVSIF), 59–79 (FFSILSLVSCLAYFTMACNYG), 103–123 (YIQWLINFPLIIVMLHWTVGV), 125–145 (ILEIAYVVCYVLFAIVCLLAA), 154–174 (WAYYGFSFVGYFIALAHSVVL), 190–210 (FLWSIVYLHVIWFLYYACWIL), and 224–244 (IFYSILDLFEFGFFGAAFSWM).

This sequence belongs to the archaeal/bacterial/fungal opsin family.

It localises to the membrane. Its function is as follows. Has a role in meiosis. The sequence is that of Meiotically up-regulated gene 73 protein (mug73) from Schizosaccharomyces pombe (strain 972 / ATCC 24843) (Fission yeast).